Reading from the N-terminus, the 450-residue chain is Deoxyguanosinetriphosphate triphosphohydrolase-like protein (450 aa).

Residues 61-274 form the HD domain; it reads RLTHSLEVAQ…MELADDIAYA (214 aa).

It belongs to the dGTPase family. Type 2 subfamily.

This chain is Deoxyguanosinetriphosphate triphosphohydrolase-like protein, found in Histophilus somni (strain 2336) (Haemophilus somnus).